The following is a 2117-amino-acid chain: Tudor domain-containing 6 (2117 aa).

Tudor domains follow at residues aspartate 62 to leucine 118, alanine 291 to methionine 350, lysine 527 to leucine 584, glutamate 757 to methionine 816, and proline 974 to isoleucine 1030. Residues alanine 1125–lysine 1216 form a disordered region. Residues alanine 1127–alanine 1152 are compositionally biased toward basic and acidic residues. 2 stretches are compositionally biased toward polar residues: residues isoleucine 1153–glycine 1174 and aspartate 1181–lysine 1209. Tudor domains follow at residues aspartate 1282 to phenylalanine 1340 and cysteine 1485 to valine 1543.

As to quaternary structure, interacts (via Tudor domain) with buc (when dimethylated on arginine residues); and may be responsible for recruitment of different protein complexes to germ plasm.

The protein resides in the cytoplasm. Tudor domain-containing protein involved in germ cell development, more specifically the formation of chromatoid body (during spermiogenesis), Balbiani body (during oogenesis), germ plasm (upon fertilization), and for proper miRNA expression and spliceosome maturation. Required for Balbiani body and germ plasm formation and mobility through interaction with dimethylated arginines in the prion-like protein Bucky ball (buc). Coordinates transcript deposition into future primordial germ cells. Interacts with known germ plasm mRNAs such as vasa, dazl, nanos3 and hook2. The protein is Tudor domain-containing 6 of Danio rerio (Zebrafish).